The following is a 536-amino-acid chain: Hydroxylamine oxidoreductase (536 aa).

An N-terminal signal peptide occupies residues 1–26 (MFEIFKKPLSRIVGATFAFAGVTLLA). Residues Cys116, Cys119, His120, His136, Cys160, Cys163, His164, His168, Cys179, Cys182, His183, His198, Cys223, Cys226, His227, Cys234, Cys237, His238, His241, Cys254, Cys257, and His258 each contribute to the heme c site. His263 serves as a coordination point for hydroxylamine. Residues His274, Cys301, Cys304, His305, His311, Cys346, Cys349, His350, His443, and Tyr451 each contribute to the heme c site.

In terms of assembly, homotrimer; subunits are linked by two covalent bonds between Tyr-451 of one subunit and heme P460 of an adjacent subunit. It depends on heme c as a cofactor.

The protein resides in the anammoxosome. The catalysed reaction is hydroxylamine + 3 Fe(III)-[cytochrome c] = nitric oxide + 3 Fe(II)-[cytochrome c] + 3 H(+). Functionally, catalyzes the oxidation of hydroxylamine to nitric oxide with cytochrome c acting as an electron acceptor. Does not oxidize hydroxylamine to nitrite. Also able to catalyze the four-electron oxidation of hydrazine to N(2) in vitro with reduced efficiency; however, this reaction is probably not physiological. In Kuenenia stuttgartiensis, this protein is Hydroxylamine oxidoreductase.